A 187-amino-acid chain; its full sequence is Ribonuclease M5 (187 aa).

The 84-residue stretch at 5–88 (KEVIVVEGKD…AFLPRKAGVP (84 aa)) folds into the Toprim domain. The Mg(2+) site is built by Glu11, Asp57, and Asp59.

This sequence belongs to the ribonuclease M5 family. It depends on Mg(2+) as a cofactor.

It is found in the cytoplasm. It catalyses the reaction Endonucleolytic cleavage of RNA, removing 21 and 42 nucleotides, respectively, from the 5'- and 3'-termini of a 5S-rRNA precursor.. Functionally, required for correct processing of both the 5' and 3' ends of 5S rRNA precursor. Cleaves both sides of a double-stranded region yielding mature 5S rRNA in one step. This is Ribonuclease M5 from Lactiplantibacillus plantarum (strain ATCC BAA-793 / NCIMB 8826 / WCFS1) (Lactobacillus plantarum).